The primary structure comprises 203 residues: Cytochrome c biogenesis CcmF N-terminal-like mitochondrial protein 2 (203 aa).

A run of 2 helical transmembrane segments spans residues 44–64 (IWIL…SWWA) and 143–163 (IFLW…FYQM).

It belongs to the CcmF/CycK/Ccl1/NrfE/CcsA family. As to quaternary structure, interacts with CCMFC, CCMFN1, CCMH and CYTC-1.

The protein resides in the mitochondrion inner membrane. Functionally, forms a complex with CCMFC, CCMFN1 and CCMH that performs the assembly of heme with c-type apocytochromes in mitochondria. This is Cytochrome c biogenesis CcmF N-terminal-like mitochondrial protein 2 from Arabidopsis thaliana (Mouse-ear cress).